The sequence spans 218 residues: Octanoyltransferase (218 aa).

Residues 27 to 210 form the BPL/LPL catalytic domain; it reads TGGEDTLYLV…QFLAIFTHPA (184 aa). Substrate contacts are provided by residues 72–79, 139–141, and 152–154; these read RGGNITCH, SIG, and GLA. The active-site Acyl-thioester intermediate is C170.

The protein belongs to the LipB family.

It localises to the cytoplasm. It catalyses the reaction octanoyl-[ACP] + L-lysyl-[protein] = N(6)-octanoyl-L-lysyl-[protein] + holo-[ACP] + H(+). It participates in protein modification; protein lipoylation via endogenous pathway; protein N(6)-(lipoyl)lysine from octanoyl-[acyl-carrier-protein]: step 1/2. In terms of biological role, catalyzes the transfer of endogenously produced octanoic acid from octanoyl-acyl-carrier-protein onto the lipoyl domains of lipoate-dependent enzymes. Lipoyl-ACP can also act as a substrate although octanoyl-ACP is likely to be the physiological substrate. In Nitratidesulfovibrio vulgaris (strain ATCC 29579 / DSM 644 / CCUG 34227 / NCIMB 8303 / VKM B-1760 / Hildenborough) (Desulfovibrio vulgaris), this protein is Octanoyltransferase.